The following is a 475-amino-acid chain: Adenosylhomocysteinase (475 aa).

Thr60, Asp133, and Glu198 together coordinate substrate. 199 to 201 (TTT) is a binding site for NAD(+). The substrate site is built by Lys228 and Asp232. NAD(+) is bound by residues Asn233, 262-267 (GYGDVG), Glu285, Asn320, 341-343 (IGH), and Asn389.

Belongs to the adenosylhomocysteinase family. NAD(+) serves as cofactor.

It is found in the cytoplasm. The enzyme catalyses S-adenosyl-L-homocysteine + H2O = L-homocysteine + adenosine. The protein operates within amino-acid biosynthesis; L-homocysteine biosynthesis; L-homocysteine from S-adenosyl-L-homocysteine: step 1/1. In terms of biological role, may play a key role in the regulation of the intracellular concentration of adenosylhomocysteine. The sequence is that of Adenosylhomocysteinase from Syntrophotalea carbinolica (strain DSM 2380 / NBRC 103641 / GraBd1) (Pelobacter carbinolicus).